Consider the following 203-residue polypeptide: Excretory canal abnormal exc-13 (203 aa).

The N-terminal stretch at 1–20 (MIGFLKFALIGTVLLGVANG) is a signal peptide. Residues asparagine 32, asparagine 84, and asparagine 188 are each glycosylated (N-linked (GlcNAc...) asparagine).

The protein belongs to the UPF0376 family.

The protein localises to the secreted. This Caenorhabditis elegans protein is Excretory canal abnormal exc-13.